The chain runs to 587 residues: Cyclic GMP-AMP synthase-like receptor (587 aa).

Disordered regions lie at residues 26 to 48 (IHPS…RRDD) and 77 to 229 (TRMH…DRPL). Basic and acidic residues-rich tracts occupy residues 95–138 (TRDR…RDSL), 150–185 (DGAR…RESL), and 204–228 (PESR…HDRP). Mg(2+)-binding residues include Glu307, Asp309, and Asp409.

It belongs to the mab-21 family. Mg(2+) is required as a cofactor. Mn(2+) serves as cofactor.

It catalyses the reaction UTP + ATP = 2',3'-cUAMP + 2 diphosphate. Functionally, nucleotidyltransferase that catalyzes the formation of cyclic UMP-AMP (2',3'-cUAMP) from ATP and UTP and plays a key role in innate immunity. Acts as a key sensor of double-stranded DNA (dsDNA), the presence of dsDNA in the cytoplasm being a danger signal that triggers the immune responses. Directly binds dsDNA, activating the nucleotidyltransferase activity, leading to synthesis of 2',3'-cUAMP, a second messenger that binds to and activates Sting, thereby triggering the immune response via activation of the NF-kappa-B transcription factor. The sequence is that of Cyclic GMP-AMP synthase-like receptor from Magallana gigas (Pacific oyster).